A 247-amino-acid polypeptide reads, in one-letter code: Small ribosomal subunit protein uS2 (247 aa).

This sequence belongs to the universal ribosomal protein uS2 family.

The polypeptide is Small ribosomal subunit protein uS2 (Ralstonia pickettii (strain 12J)).